The sequence spans 192 residues: Large ribosomal subunit protein bL9 (192 aa).

The interval 172–192 is disordered; it reads DALRPEDFFDPEADGIDEDEA. Positions 179–192 are enriched in acidic residues; that stretch reads FFDPEADGIDEDEA.

The protein belongs to the bacterial ribosomal protein bL9 family.

Functionally, binds to the 23S rRNA. The polypeptide is Large ribosomal subunit protein bL9 (Rhizobium etli (strain CIAT 652)).